The primary structure comprises 249 residues: 2,3-bisphosphoglycerate-dependent phosphoglycerate mutase (249 aa).

Substrate contacts are provided by residues 11 to 18 (RHGESEWN), 24 to 25 (TG), Arg63, 90 to 93 (ERHY), Lys101, and 117 to 118 (RR). Residue His12 is the Tele-phosphohistidine intermediate of the active site. Glu90 functions as the Proton donor/acceptor in the catalytic mechanism. The segment at 119–138 (SYDTPPPPIERGSTYSQDAD) is disordered. Residue 184 to 185 (GN) coordinates substrate.

The protein belongs to the phosphoglycerate mutase family. BPG-dependent PGAM subfamily.

The enzyme catalyses (2R)-2-phosphoglycerate = (2R)-3-phosphoglycerate. It participates in carbohydrate degradation; glycolysis; pyruvate from D-glyceraldehyde 3-phosphate: step 3/5. Catalyzes the interconversion of 2-phosphoglycerate and 3-phosphoglycerate. The sequence is that of 2,3-bisphosphoglycerate-dependent phosphoglycerate mutase from Mycolicibacterium paratuberculosis (strain ATCC BAA-968 / K-10) (Mycobacterium paratuberculosis).